The following is a 246-amino-acid chain: NAD-dependent protein deacetylase (246 aa).

The Deacetylase sirtuin-type domain maps to 1-246 (MKMKEFLDLL…RRVMEEGGIS (246 aa)). Residues Ala-22, Thr-26, Phe-33, Arg-34, Gln-98, Ile-100, Asp-101, and His-116 each coordinate NAD(+). Phe-33 contacts nicotinamide. 2 residues coordinate nicotinamide: Ile-100 and Asp-101. The Proton acceptor role is filled by His-116. Zn(2+)-binding residues include Cys-124, Cys-127, Cys-148, and Cys-151. Ser-189, Ser-190, Asn-214, Leu-215, Gly-216, Asp-231, and Val-232 together coordinate NAD(+).

This sequence belongs to the sirtuin family. Class U subfamily. The cofactor is Zn(2+).

The protein resides in the cytoplasm. The catalysed reaction is N(6)-acetyl-L-lysyl-[protein] + NAD(+) + H2O = 2''-O-acetyl-ADP-D-ribose + nicotinamide + L-lysyl-[protein]. Non-competitively inhibited by nicotinamide in vitro and in vivo, but not by nicotinic acid. Nicotinamide inhibits the deacetylation activity by reacting with a reaction intermediate. Functionally, NAD-dependent protein deacetylase which modulates the activities of several enzymes which are inactive in their acetylated form. Also has depropionylation activity in vitro. Also able to ADP-ribosylate peptide substrates with Arg or Lys in the +2 position. The role of this function in vivo is not clear. In Thermotoga maritima (strain ATCC 43589 / DSM 3109 / JCM 10099 / NBRC 100826 / MSB8), this protein is NAD-dependent protein deacetylase.